Consider the following 366-residue polypeptide: C-X-C chemokine receptor type 3 (366 aa).

At 1–55 the chain is on the extracellular side; that stretch reads MVPEMSERQEFQASEFAYLLENSSYDYGENETYFCCTSPPCPQDFSLNFDRTFLP. An N-linked (GlcNAc...) asparagine glycan is attached at Asn-22. Sulfotyrosine occurs at positions 25 and 27. Residue Asn-30 is glycosylated (N-linked (GlcNAc...) asparagine). A helical transmembrane segment spans residues 56-76; that stretch reads VLYSLLFVLGLLGNGVVAVVL. Residues 77 to 88 are Cytoplasmic-facing; sequence LSQRAALSSTDT. Residues 89 to 109 form a helical membrane-spanning segment; it reads FLLHLAVADALLVLTLPLWAV. The Extracellular segment spans residues 110–124; the sequence is DAAIQWVFGSGLCKV. Cysteines 122 and 201 form a disulfide. A helical membrane pass occupies residues 125-145; that stretch reads AGALFNINFYAGALLLACISF. Over 146 to 167 the chain is Cytoplasmic; the sequence is DRYLSIVHATQFYRRGPPARVA. The chain crosses the membrane as a helical span at residues 168 to 188; sequence LTCVAVWGLCLLFALPDFIFL. The Extracellular segment spans residues 189 to 221; the sequence is SSHHDNRLNATHCQYNFPQEGRTALRVLQLVAG. Asn-197 is a glycosylation site (N-linked (GlcNAc...) asparagine). Residues 222–242 traverse the membrane as a helical segment; it reads FLLPLLVMAYCYARILTVLLV. The Cytoplasmic segment spans residues 243–254; it reads SRGQRRLRAMRL. Residues 255–275 traverse the membrane as a helical segment; sequence VVVVVVAFALCWTPYHLVVLV. The Extracellular segment spans residues 276–299; that stretch reads DTLMDLGALARNCGRESRVDVAKS. The chain crosses the membrane as a helical span at residues 300-320; it reads VTSGMGYMHCCLNPLLYAFVG. The Cytoplasmic portion of the chain corresponds to 321 to 366; it reads VKFRERMWVLLMRLGCPDQRGHQRQPSASRRDSSWSETTEASYSGL. The disordered stretch occupies residues 339-366; sequence QRGHQRQPSASRRDSSWSETTEASYSGL. Residues 355 to 366 show a composition bias toward polar residues; sequence WSETTEASYSGL.

It belongs to the G-protein coupled receptor 1 family. Homomer. Forms heteromers with ACKR4. Interacts with PF4/CXCL4. Post-translationally, sulfation on Tyr-25 and Tyr-27 is essential for CXCL10 binding. N-glycosylated.

The protein resides in the cell membrane. Its function is as follows. Receptor for the C-X-C chemokine CXCL9, CXCL10 and CXCL11 and mediates the proliferation, survival and angiogenic activity of mesangial cells through a heterotrimeric G-protein signaling pathway. Probably promotes cell chemotaxis response. Binds to CCL21. Upon activation by PF4, induces activated T-lymphocytes migration mediated via downstream Ras/extracellular signal-regulated kinase (ERK) signaling. The sequence is that of C-X-C chemokine receptor type 3 (CXCR3) from Capra hircus (Goat).